Here is a 145-residue protein sequence, read N- to C-terminus: Large ribosomal subunit protein uL13 (145 aa).

This sequence belongs to the universal ribosomal protein uL13 family. In terms of assembly, part of the 50S ribosomal subunit.

In terms of biological role, this protein is one of the early assembly proteins of the 50S ribosomal subunit, although it is not seen to bind rRNA by itself. It is important during the early stages of 50S assembly. The chain is Large ribosomal subunit protein uL13 from Bacillus pumilus (strain SAFR-032).